We begin with the raw amino-acid sequence, 235 residues long: Large ribosomal subunit protein uL1 (235 aa).

This sequence belongs to the universal ribosomal protein uL1 family. As to quaternary structure, part of the 50S ribosomal subunit.

In terms of biological role, binds directly to 23S rRNA. The L1 stalk is quite mobile in the ribosome, and is involved in E site tRNA release. Functionally, protein L1 is also a translational repressor protein, it controls the translation of the L11 operon by binding to its mRNA. This Nitratidesulfovibrio vulgaris (strain ATCC 29579 / DSM 644 / CCUG 34227 / NCIMB 8303 / VKM B-1760 / Hildenborough) (Desulfovibrio vulgaris) protein is Large ribosomal subunit protein uL1.